A 135-amino-acid chain; its full sequence is S-adenosylmethionine decarboxylase proenzyme (135 aa).

Residue serine 63 is the Schiff-base intermediate with substrate; via pyruvic acid of the active site. A Pyruvic acid (Ser); by autocatalysis modification is found at serine 63. Histidine 68 functions as the Proton acceptor; for processing activity in the catalytic mechanism. Catalysis depends on cysteine 83, which acts as the Proton donor; for catalytic activity.

The protein belongs to the prokaryotic AdoMetDC family. Type 1 subfamily. In terms of assembly, heterotetramer of two alpha and two beta chains arranged as a dimer of alpha/beta heterodimers. The cofactor is pyruvate. In terms of processing, is synthesized initially as an inactive proenzyme. Formation of the active enzyme involves a self-maturation process in which the active site pyruvoyl group is generated from an internal serine residue via an autocatalytic post-translational modification. Two non-identical subunits are generated from the proenzyme in this reaction, and the pyruvate is formed at the N-terminus of the alpha chain, which is derived from the carboxyl end of the proenzyme. The post-translation cleavage follows an unusual pathway, termed non-hydrolytic serinolysis, in which the side chain hydroxyl group of the serine supplies its oxygen atom to form the C-terminus of the beta chain, while the remainder of the serine residue undergoes an oxidative deamination to produce ammonia and the pyruvoyl group blocking the N-terminus of the alpha chain.

The catalysed reaction is S-adenosyl-L-methionine + H(+) = S-adenosyl 3-(methylsulfanyl)propylamine + CO2. It functions in the pathway amine and polyamine biosynthesis; S-adenosylmethioninamine biosynthesis; S-adenosylmethioninamine from S-adenosyl-L-methionine: step 1/1. Functionally, catalyzes the decarboxylation of S-adenosylmethionine to S-adenosylmethioninamine (dcAdoMet), the propylamine donor required for the synthesis of the polyamines spermine and spermidine from the diamine putrescine. The chain is S-adenosylmethionine decarboxylase proenzyme from Thermodesulfovibrio yellowstonii (strain ATCC 51303 / DSM 11347 / YP87).